The chain runs to 232 residues: Flagellar L-ring protein (232 aa).

The signal sequence occupies residues 1-21 (MQKNAAHTYAISSLLVLSLTG). The N-palmitoyl cysteine moiety is linked to residue Cys-22. A lipid anchor (S-diacylglycerol cysteine) is attached at Cys-22.

It belongs to the FlgH family. In terms of assembly, the basal body constitutes a major portion of the flagellar organelle and consists of four rings (L,P,S, and M) mounted on a central rod.

The protein resides in the cell outer membrane. It localises to the bacterial flagellum basal body. Assembles around the rod to form the L-ring and probably protects the motor/basal body from shearing forces during rotation. In Escherichia coli O7:K1 (strain IAI39 / ExPEC), this protein is Flagellar L-ring protein.